Consider the following 326-residue polypeptide: Protein SEH1 (326 aa).

5 WD repeats span residues 7-46 (TLDS…SSTF), 54-95 (VSES…AHGL), 105-146 (NKSS…ELKN), 224-266 (DKGD…DLEG), and 278-317 (GHQG…EWHE).

The protein belongs to the WD repeat SEC13 family. In terms of assembly, part of the nuclear pore complex (NPC). The NPC has an eight-fold symmetrical structure comprising a central transport channel and two rings, the cytoplasmic and nuclear rings, to which eight filaments are attached. The cytoplasmic filaments have loose ends, while the nuclear filaments are joined in a distal ring, forming a nuclear basket. NPCs are highly dynamic in configuration and composition, and can be devided in 3 subcomplexes, the NUP62 subcomplex, the NUP107-160 subcomplex and the NUP93 subcomplex, containing approximately 30 different nucleoporin proteins.

Its subcellular location is the nucleus envelope. It localises to the nucleus. The protein localises to the cytoplasm. The protein resides in the nuclear pore complex. Functionally, required for proper export of mRNAs from the nucleus to the cytoplasm. This chain is Protein SEH1, found in Arabidopsis thaliana (Mouse-ear cress).